The sequence spans 139 residues: Acidic phospholipase A2 BpPLA2-TXI (139 aa).

Positions 1–16 are cleaved as a signal peptide; it reads MRTLWIMAVLLVGVEG. The cysteines at positions 44 and 60 are disulfide-linked. The Ca(2+) site is built by glycine 45 and glycine 47. Residue histidine 63 is part of the active site. Aspartate 64 contacts Ca(2+). 3 disulfide bridges follow: cysteine 65–cysteine 139, cysteine 73–cysteine 97, and cysteine 91–cysteine 102.

Belongs to the phospholipase A2 family. Group II subfamily. D49 sub-subfamily. Requires Ca(2+) as cofactor. As to expression, expressed by the venom gland.

The protein resides in the secreted. The enzyme catalyses a 1,2-diacyl-sn-glycero-3-phosphocholine + H2O = a 1-acyl-sn-glycero-3-phosphocholine + a fatty acid + H(+). Its function is as follows. PLA2 catalyzes the calcium-dependent hydrolysis of the 2-acyl groups in 3-sn-phosphoglycerides. This is Acidic phospholipase A2 BpPLA2-TXI from Bothrops pauloensis (Neuwied's lancehead).